Here is an 86-residue protein sequence, read N- to C-terminus: YcgL domain-containing protein Smlt4554 (86 aa).

The region spanning 1–85 (MHAYVYKSQL…SVASLMPRHY (85 aa)) is the YcgL domain.

The polypeptide is YcgL domain-containing protein Smlt4554 (Stenotrophomonas maltophilia (strain K279a)).